The following is a 407-amino-acid chain: Na(+)-translocating NADH-quinone reductase subunit F (407 aa).

A helical membrane pass occupies residues 6 to 26 (IFLAIGMFTAIVLGLVAIILV). Residues 35 to 127 (GDVTIQINGE…DMQIRVPEEV (93 aa)) form the 2Fe-2S ferredoxin-type domain. [2Fe-2S] cluster is bound by residues Cys70, Cys76, Cys79, and Cys111. The 140-residue stretch at 130–269 (VKKWECTVES…YGPFGEFFAK (140 aa)) folds into the FAD-binding FR-type domain.

This sequence belongs to the NqrF family. In terms of assembly, composed of six subunits; NqrA, NqrB, NqrC, NqrD, NqrE and NqrF. Requires [2Fe-2S] cluster as cofactor. FAD serves as cofactor.

The protein resides in the cell inner membrane. It carries out the reaction a ubiquinone + n Na(+)(in) + NADH + H(+) = a ubiquinol + n Na(+)(out) + NAD(+). Functionally, NQR complex catalyzes the reduction of ubiquinone-1 to ubiquinol by two successive reactions, coupled with the transport of Na(+) ions from the cytoplasm to the periplasm. The first step is catalyzed by NqrF, which accepts electrons from NADH and reduces ubiquinone-1 to ubisemiquinone by a one-electron transfer pathway. The protein is Na(+)-translocating NADH-quinone reductase subunit F of Pseudomonas aeruginosa (strain UCBPP-PA14).